The following is a 343-amino-acid chain: Small ribosomal subunit biogenesis GTPase RsgA (343 aa).

The CP-type G domain maps to 116–275 (RGQLKPVAAN…LIDSPGIREF (160 aa)). GTP contacts are provided by residues 163–166 (NKAD) and 217–225 (GQSGVGKSS). 4 residues coordinate Zn(2+): Cys299, Cys304, His306, and Cys312.

This sequence belongs to the TRAFAC class YlqF/YawG GTPase family. RsgA subfamily. As to quaternary structure, monomer. Associates with 30S ribosomal subunit, binds 16S rRNA. It depends on Zn(2+) as a cofactor.

It localises to the cytoplasm. One of several proteins that assist in the late maturation steps of the functional core of the 30S ribosomal subunit. Helps release RbfA from mature subunits. May play a role in the assembly of ribosomal proteins into the subunit. Circularly permuted GTPase that catalyzes slow GTP hydrolysis, GTPase activity is stimulated by the 30S ribosomal subunit. This chain is Small ribosomal subunit biogenesis GTPase RsgA, found in Pseudomonas fluorescens (strain ATCC BAA-477 / NRRL B-23932 / Pf-5).